Here is a 264-residue protein sequence, read N- to C-terminus: Glutamate racemase (264 aa).

Residues Asp-10–Ser-11 and Tyr-42–Gly-43 each bind substrate. Catalysis depends on Cys-73, which acts as the Proton donor/acceptor. Residue Asn-74–Thr-75 coordinates substrate. Cys-183 serves as the catalytic Proton donor/acceptor. Thr-184 to His-185 contacts substrate.

It belongs to the aspartate/glutamate racemases family.

The enzyme catalyses L-glutamate = D-glutamate. The protein operates within cell wall biogenesis; peptidoglycan biosynthesis. Its function is as follows. Provides the (R)-glutamate required for cell wall biosynthesis. In Streptococcus equi subsp. zooepidemicus (strain H70), this protein is Glutamate racemase.